The sequence spans 248 residues: Large ribosomal subunit protein uL30 (248 aa).

The interval 22–42 (KSQEKARAERQAEIEKKKAAN) is disordered. The span at 24–42 (QEKARAERQAEIEKKKAAN) shows a compositional bias: basic and acidic residues.

Belongs to the universal ribosomal protein uL30 family. In terms of assembly, component of the large ribosomal subunit (LSU). Mature N.crassa ribosomes consist of a small (40S) and a large (60S) subunit. The 40S small subunit contains 1 molecule of ribosomal RNA (18S rRNA) and at least 32 different proteins. The large 60S subunit contains 3 rRNA molecules (26S, 5.8S and 5S rRNA) and at least 42 different proteins.

Its subcellular location is the cytoplasm. In terms of biological role, component of the ribosome, a large ribonucleoprotein complex responsible for the synthesis of proteins in the cell. The small ribosomal subunit (SSU) binds messenger RNAs (mRNAs) and translates the encoded message by selecting cognate aminoacyl-transfer RNA (tRNA) molecules. The large subunit (LSU) contains the ribosomal catalytic site termed the peptidyl transferase center (PTC), which catalyzes the formation of peptide bonds, thereby polymerizing the amino acids delivered by tRNAs into a polypeptide chain. The nascent polypeptides leave the ribosome through a tunnel in the LSU and interact with protein factors that function in enzymatic processing, targeting, and the membrane insertion of nascent chains at the exit of the ribosomal tunnel. This is Large ribosomal subunit protein uL30 (rpl-7) from Neurospora crassa (strain ATCC 24698 / 74-OR23-1A / CBS 708.71 / DSM 1257 / FGSC 987).